Consider the following 1029-residue polypeptide: Beta-galactosidase (1029 aa).

Positions 108 and 207 each coordinate substrate. Asp-207 provides a ligand contact to Na(+). 3 residues coordinate Mg(2+): Glu-422, His-424, and Glu-467. Residues Glu-467 and 543–546 (EYAH) each bind substrate. Residue Glu-467 is the Proton donor of the active site. The active-site Nucleophile is Glu-543. Asn-603 is a Mg(2+) binding site. Residues Phe-607 and Asn-610 each contribute to the Na(+) site. Substrate is bound by residues Asn-610 and Trp-1005.

The protein belongs to the glycosyl hydrolase 2 family. As to quaternary structure, homotetramer. It depends on Mg(2+) as a cofactor. Na(+) serves as cofactor.

The enzyme catalyses Hydrolysis of terminal non-reducing beta-D-galactose residues in beta-D-galactosides.. In Escherichia coli, this protein is Beta-galactosidase.